Reading from the N-terminus, the 551-residue chain is Arginine--tRNA ligase (551 aa).

The 'HIGH' region motif lies at 123–133; sequence ANPTGPLTIGR.

The protein belongs to the class-I aminoacyl-tRNA synthetase family. In terms of assembly, monomer.

It is found in the cytoplasm. It catalyses the reaction tRNA(Arg) + L-arginine + ATP = L-arginyl-tRNA(Arg) + AMP + diphosphate. The protein is Arginine--tRNA ligase of Chlorobaculum tepidum (strain ATCC 49652 / DSM 12025 / NBRC 103806 / TLS) (Chlorobium tepidum).